The primary structure comprises 553 residues: Keratin, type II cytoskeletal 6A (553 aa).

Residues methionine 1–serine 20 show a composition bias toward polar residues. A disordered region spans residues methionine 1–alanine 21. Positions methionine 1–glutamate 151 are head. Positions glutamate 152–leucine 187 are coil 1A. The region spanning glutamate 152 to leucine 465 is the IF rod domain. Residues glutamine 188–tyrosine 206 form a linker 1 region. The tract at residues isoleucine 207–methionine 298 is coil 1B. The interval glutamine 299 to isoleucine 322 is linker 12. Residues isoleucine 323–glutamate 461 are coil 2. A tail region spans residues glutamate 462–glutamine 553. The disordered stretch occupies residues leucine 528–glutamine 553. The span at serine 531–glutamine 553 shows a compositional bias: low complexity.

This sequence belongs to the intermediate filament family. In terms of assembly, heterodimer of a type I and a type II keratin. KRT6 isomers associate with KRT16 and/or KRT17. Interacts with TCHP. In terms of tissue distribution, predominates in the adult trunk skin, tongue, trachea/esophagus and eye. In adult skin, localization is restricted to hair follicles, where it is localized predominantly in the outer root sheath.

In terms of biological role, epidermis-specific type I keratin involved in wound healing. Involved in the activation of follicular keratinocytes after wounding, while it does not play a major role in keratinocyte proliferation or migration. Participates in the regulation of epithelial migration by inhibiting the activity of SRC during wound repair. This Mus musculus (Mouse) protein is Keratin, type II cytoskeletal 6A (Krt6a).